The primary structure comprises 157 residues: Ribosome-binding factor A (157 aa).

The disordered stretch occupies residues 126-157 (RARATAQYAGDADPYKHDDEPSDDFEDDSDEE). The span at 145–157 (EPSDDFEDDSDEE) shows a compositional bias: acidic residues.

This sequence belongs to the RbfA family. In terms of assembly, monomer. Binds 30S ribosomal subunits, but not 50S ribosomal subunits or 70S ribosomes.

It is found in the cytoplasm. One of several proteins that assist in the late maturation steps of the functional core of the 30S ribosomal subunit. Associates with free 30S ribosomal subunits (but not with 30S subunits that are part of 70S ribosomes or polysomes). Required for efficient processing of 16S rRNA. May interact with the 5'-terminal helix region of 16S rRNA. This chain is Ribosome-binding factor A, found in Bifidobacterium longum (strain DJO10A).